We begin with the raw amino-acid sequence, 203 residues long: NAD(P)H-quinone oxidoreductase subunit I (203 aa).

2 4Fe-4S ferredoxin-type domains span residues 55–84 (GRIHFEFDKCIACEVCVRVCPINLPVVDWE) and 95–124 (KHYSIDFGVCIFCGNCVEYCPTNCLSMTEE). Positions 64, 67, 70, 74, 104, 107, 110, and 114 each coordinate [4Fe-4S] cluster.

Belongs to the complex I 23 kDa subunit family. NDH-1 is composed of at least 11 different subunits. [4Fe-4S] cluster serves as cofactor.

It localises to the cellular thylakoid membrane. The enzyme catalyses a plastoquinone + NADH + (n+1) H(+)(in) = a plastoquinol + NAD(+) + n H(+)(out). The catalysed reaction is a plastoquinone + NADPH + (n+1) H(+)(in) = a plastoquinol + NADP(+) + n H(+)(out). Its function is as follows. NDH-1 shuttles electrons from an unknown electron donor, via FMN and iron-sulfur (Fe-S) centers, to quinones in the respiratory and/or the photosynthetic chain. The immediate electron acceptor for the enzyme in this species is believed to be plastoquinone. Couples the redox reaction to proton translocation, and thus conserves the redox energy in a proton gradient. This chain is NAD(P)H-quinone oxidoreductase subunit I (ndhI), found in Picosynechococcus sp. (strain ATCC 27264 / PCC 7002 / PR-6) (Agmenellum quadruplicatum).